A 571-amino-acid polypeptide reads, in one-letter code: Adenine deaminase (571 aa).

It belongs to the metallo-dependent hydrolases superfamily. Adenine deaminase family. Mn(2+) is required as a cofactor.

The enzyme catalyses adenine + H2O + H(+) = hypoxanthine + NH4(+). This Dehalococcoides mccartyi (strain ATCC BAA-2100 / JCM 16839 / KCTC 5957 / BAV1) protein is Adenine deaminase.